We begin with the raw amino-acid sequence, 482 residues long: UDP-N-acetylmuramate--L-alanine ligase (482 aa).

ATP is bound at residue 123-129 (GTHGKTT).

This sequence belongs to the MurCDEF family.

The protein localises to the cytoplasm. It catalyses the reaction UDP-N-acetyl-alpha-D-muramate + L-alanine + ATP = UDP-N-acetyl-alpha-D-muramoyl-L-alanine + ADP + phosphate + H(+). It functions in the pathway cell wall biogenesis; peptidoglycan biosynthesis. Functionally, cell wall formation. This Pseudomonas putida (strain ATCC 47054 / DSM 6125 / CFBP 8728 / NCIMB 11950 / KT2440) protein is UDP-N-acetylmuramate--L-alanine ligase.